We begin with the raw amino-acid sequence, 426 residues long: D-tagatose-1,6-bisphosphate aldolase subunit KbaZ (426 aa).

Belongs to the GatZ/KbaZ family. KbaZ subfamily. In terms of assembly, forms a complex with KbaY.

The protein operates within carbohydrate metabolism; D-tagatose 6-phosphate degradation; D-glyceraldehyde 3-phosphate and glycerone phosphate from D-tagatose 6-phosphate: step 2/2. Component of the tagatose-1,6-bisphosphate aldolase KbaYZ that is required for full activity and stability of the Y subunit. Could have a chaperone-like function for the proper and stable folding of KbaY. When expressed alone, KbaZ does not show any aldolase activity. The chain is D-tagatose-1,6-bisphosphate aldolase subunit KbaZ from Escherichia coli O1:K1 / APEC.